The sequence spans 170 residues: Copper transporter 1 (170 aa).

The interval Met-1–Met-29 is disordered. Residues Met-9 to Met-29 are compositionally biased toward low complexity. Transmembrane regions (helical) follow at residues Gly-65–Ala-85 and Ile-114–Val-134.

It belongs to the copper transporter (Ctr) (TC 1.A.56) family. SLC31A subfamily. In terms of tissue distribution, expressed in the root apex, lateral root primordia, embryo, trichomes, guard cells and pollen grains.

Its subcellular location is the membrane. Copper transporter involved in copper acquisition and transport in leaves. Required for copper homeostasis and normal plant growth and development. The protein is Copper transporter 1 (COPT1) of Arabidopsis thaliana (Mouse-ear cress).